Consider the following 150-residue polypeptide: Nucleoside diphosphate kinase (150 aa).

ATP contacts are provided by lysine 9, phenylalanine 57, arginine 85, threonine 91, arginine 102, and asparagine 112. The active-site Pros-phosphohistidine intermediate is histidine 115.

Belongs to the NDK family. Mg(2+) serves as cofactor.

Its subcellular location is the cytoplasm. It carries out the reaction a 2'-deoxyribonucleoside 5'-diphosphate + ATP = a 2'-deoxyribonucleoside 5'-triphosphate + ADP. The catalysed reaction is a ribonucleoside 5'-diphosphate + ATP = a ribonucleoside 5'-triphosphate + ADP. Functionally, major role in the synthesis of nucleoside triphosphates other than ATP. The ATP gamma phosphate is transferred to the NDP beta phosphate via a ping-pong mechanism, using a phosphorylated active-site intermediate. The polypeptide is Nucleoside diphosphate kinase (Methanothermobacter thermautotrophicus (strain ATCC 29096 / DSM 1053 / JCM 10044 / NBRC 100330 / Delta H) (Methanobacterium thermoautotrophicum)).